Consider the following 61-residue polypeptide: MAKKSQIAKNKRPAKFSTQEYTRCERCGRPHSVYRKFKLCRVCLRDLAHKGQIPGMKKASW.

Zn(2+) contacts are provided by Cys24, Cys27, Cys40, and Cys43.

Belongs to the universal ribosomal protein uS14 family. Zinc-binding uS14 subfamily. As to quaternary structure, part of the 30S ribosomal subunit. Contacts proteins S3 and S10. Requires Zn(2+) as cofactor.

Its function is as follows. Binds 16S rRNA, required for the assembly of 30S particles and may also be responsible for determining the conformation of the 16S rRNA at the A site. This Ligilactobacillus salivarius (strain UCC118) (Lactobacillus salivarius) protein is Small ribosomal subunit protein uS14B.